The chain runs to 1365 residues: Serine/threonine-protein kinase LMTK1 (1365 aa).

The helical transmembrane segment at 32–52 (LAVVAVSFSGIFTVVILMLAC) threads the bilayer. Residues 126–396 (LLYLKEIGHG…PTAEEVHLLL (271 aa)) enclose the Protein kinase domain. Residues 132 to 140 (IGHGWFGKV) and Lys157 contribute to the ATP site. The Proton acceptor role is filled by Asp254. Ser500 is subject to Phosphoserine. Disordered stretches follow at residues 550 to 623 (PDCA…LPAE), 638 to 698 (DDPL…GYVS), 791 to 1186 (QEAE…PAVP), 1237 to 1293 (ESPT…EWDG), and 1343 to 1365 (ISDS…YTEA). Positions 560–575 (QAVTDQDNNSEESTVA) are enriched in polar residues. Low complexity-rich tracts occupy residues 638–655 (DDPL…QPSP) and 675–686 (SSNMSANNNSAS). 2 stretches are compositionally biased toward polar residues: residues 848–860 (LESS…QEAP) and 869–879 (EATSGVFTDLS). Composition is skewed to low complexity over residues 904-918 (PDSL…SASD) and 981-993 (PLLS…LSKK). A compositionally biased stretch (basic and acidic residues) spans 1015–1030 (PEKHSGIQDSQKEQDL). The residue at position 1035 (Ser1035) is a Phosphoserine. Over residues 1037-1053 (GHQSVQAFPRSAVSSEV) the composition is skewed to polar residues. The segment covering 1072 to 1083 (PLGAQGPVGVQP) has biased composition (low complexity). The segment covering 1104–1132 (GSGTEPQGPSGQLSGRAQQGQMGNPSTPR) has biased composition (polar residues). Over residues 1150-1164 (PEEDEDTEDSEESDE) the composition is skewed to acidic residues. A Phosphothreonine modification is found at Thr1156. A phosphoserine mark is found at Ser1159, Ser1162, Ser1175, Ser1178, and Ser1253. Positions 1354 to 1365 (PAAGAGGRYTEA) are enriched in gly residues.

The protein belongs to the protein kinase superfamily. Tyr protein kinase family. In terms of assembly, interacts with CDK5. Post-translationally, autophosphorylated. Phosphorylated by CDK5. As to expression, expressed in brain, and, to a lower extent, in kidney, heart, lung and skeletal muscle. In the brain, expressed in the olfactory bulb, cerebellum, striatum, hippocampal formation, thalamus, hypothalamus, and pontine nuclei (at protein level).

The protein localises to the membrane. It is found in the cytoplasm. The protein resides in the perinuclear region. Its subcellular location is the cell projection. It localises to the dendrite. The protein localises to the axon. It is found in the growth cone. The enzyme catalyses L-seryl-[protein] + ATP = O-phospho-L-seryl-[protein] + ADP + H(+). It catalyses the reaction L-threonyl-[protein] + ATP = O-phospho-L-threonyl-[protein] + ADP + H(+). Its function is as follows. May be involved in neuronal differentiation. This Mus musculus (Mouse) protein is Serine/threonine-protein kinase LMTK1 (Aatk).